The primary structure comprises 859 residues: DNA-directed RNA polymerase subunit Rpo1C (859 aa).

Belongs to the RNA polymerase beta' chain family. As to quaternary structure, part of the RNA polymerase complex. Post-translationally, this protein undergoes a protein self splicing that involves a post-translational excision of the intervening region (intein) followed by peptide ligation.

The protein resides in the cytoplasm. The enzyme catalyses RNA(n) + a ribonucleoside 5'-triphosphate = RNA(n+1) + diphosphate. DNA-dependent RNA polymerase (RNAP) catalyzes the transcription of DNA into RNA using the four ribonucleoside triphosphates as substrates. Forms part of the jaw domain. This is DNA-directed RNA polymerase subunit Rpo1C from Methanocaldococcus jannaschii (strain ATCC 43067 / DSM 2661 / JAL-1 / JCM 10045 / NBRC 100440) (Methanococcus jannaschii).